The primary structure comprises 449 residues: Deoxyguanosinetriphosphate triphosphohydrolase-like protein (449 aa).

The segment at 1-27 (MTSSVWQERRHGEDKQRRNDHRSPYQR) is disordered. The span at 7-27 (QERRHGEDKQRRNDHRSPYQR) shows a compositional bias: basic and acidic residues. One can recognise an HD domain in the interval 59-255 (RLTHSLEVSQ…MELADDIAYA (197 aa)).

Belongs to the dGTPase family. Type 2 subfamily.

In Shewanella baltica (strain OS195), this protein is Deoxyguanosinetriphosphate triphosphohydrolase-like protein.